A 154-amino-acid chain; its full sequence is Egg-lysin (154 aa).

Residues 1-18 form the signal peptide; the sequence is MKLLVLWVFAMMATVAMS.

Monomer. Homodimer. Molecules associate into dimers and then rapidly dissociate again. Interacts (as a monomer) with the egg vitelline layer protein VERL (via VERL repeats); each VERL chain can bind multiple copies of lysin. As to expression, sperm.

Its subcellular location is the cytoplasmic vesicle. It is found in the secretory vesicle. The protein resides in the acrosome lumen. Functionally, creates a 3 um hole in the egg vitelline layer through which the sperm passes. Does not have enzyme activity. Species-specific interaction between the sperm protein lysin and the egg protein VERL exposes a basic surface on lysin that may dissociate the egg vitelline layer via electrostatic repulsion. Plays a role in ensuring species-specific fertilization. The protein is Egg-lysin of Haliotis fulgens (Green abalone).